A 64-amino-acid chain; its full sequence is Endodeoxyribonuclease toxin RalR (64 aa).

Ca(2+) is required as a cofactor. Mg(2+) serves as cofactor.

With respect to regulation, inhibited by EDTA. In terms of biological role, toxic component of a type I toxin-antitoxin (TA) system. Upon overexpression inhibits growth and reduces colony-forming units in both the presence and absence of the Rac prophage, cells become filamentous. Has deoxyribonuclease activity (probably endonucleolytic), does not digest RNA. Its toxic effects are neutralized by sRNA antitoxin RalA, which is encoded in trans on the opposite DNA strand. Has RAL-like activity. This is Endodeoxyribonuclease toxin RalR (ralR) from Escherichia coli (strain K12).